A 128-amino-acid polypeptide reads, in one-letter code: Gastrotropin (128 aa).

Ala-2 carries the post-translational modification N-acetylalanine.

It belongs to the calycin superfamily. Fatty-acid binding protein (FABP) family. As to expression, found exclusively in the ileum and to a lesser extent in distal jejunum.

Its subcellular location is the cytoplasm. It localises to the membrane. Binds to bile acids and is involved in enterohepatic bile acid metabolism. Required for efficient apical to basolateral transport of conjugated bile acids in ileal enterocytes. Stimulates gastric acid and pepsinogen secretion. The sequence is that of Gastrotropin (FABP6) from Sus scrofa (Pig).